We begin with the raw amino-acid sequence, 375 residues long: Succinyl-diaminopimelate desuccinylase (375 aa).

His-66 serves as a coordination point for Zn(2+). The active site involves Asp-68. Asp-99 serves as a coordination point for Zn(2+). The active-site Proton acceptor is the Glu-130. Zn(2+)-binding residues include Glu-131, Glu-159, and His-345.

The protein belongs to the peptidase M20A family. DapE subfamily. In terms of assembly, homodimer. Zn(2+) is required as a cofactor. Requires Co(2+) as cofactor.

It carries out the reaction N-succinyl-(2S,6S)-2,6-diaminopimelate + H2O = (2S,6S)-2,6-diaminopimelate + succinate. It participates in amino-acid biosynthesis; L-lysine biosynthesis via DAP pathway; LL-2,6-diaminopimelate from (S)-tetrahydrodipicolinate (succinylase route): step 3/3. In terms of biological role, catalyzes the hydrolysis of N-succinyl-L,L-diaminopimelic acid (SDAP), forming succinate and LL-2,6-diaminopimelate (DAP), an intermediate involved in the bacterial biosynthesis of lysine and meso-diaminopimelic acid, an essential component of bacterial cell walls. This chain is Succinyl-diaminopimelate desuccinylase, found in Xanthobacter autotrophicus (strain ATCC BAA-1158 / Py2).